The primary structure comprises 570 residues: Urease subunit alpha (570 aa).

A Urease domain is found at Gly-131–Phe-570. The Ni(2+) site is built by His-136, His-138, and Lys-219. N6-carboxylysine is present on Lys-219. His-221 contacts substrate. 2 residues coordinate Ni(2+): His-248 and His-274. The active-site Proton donor is the His-322. Asp-362 lines the Ni(2+) pocket.

Belongs to the metallo-dependent hydrolases superfamily. Urease alpha subunit family. As to quaternary structure, heterotrimer of UreA (gamma), UreB (beta) and UreC (alpha) subunits. Three heterotrimers associate to form the active enzyme. Requires Ni cation as cofactor. In terms of processing, carboxylation allows a single lysine to coordinate two nickel ions.

It localises to the cytoplasm. The enzyme catalyses urea + 2 H2O + H(+) = hydrogencarbonate + 2 NH4(+). Its pathway is nitrogen metabolism; urea degradation; CO(2) and NH(3) from urea (urease route): step 1/1. This Sinorhizobium fredii (strain NBRC 101917 / NGR234) protein is Urease subunit alpha.